Reading from the N-terminus, the 67-residue chain is DNA-directed RNA polymerase subunit omega (67 aa).

This sequence belongs to the RNA polymerase subunit omega family. The RNAP catalytic core consists of 2 alpha, 1 beta, 1 beta' and 1 omega subunit. When a sigma factor is associated with the core the holoenzyme is formed, which can initiate transcription.

The catalysed reaction is RNA(n) + a ribonucleoside 5'-triphosphate = RNA(n+1) + diphosphate. Promotes RNA polymerase assembly. Latches the N- and C-terminal regions of the beta' subunit thereby facilitating its interaction with the beta and alpha subunits. This Cupriavidus metallidurans (strain ATCC 43123 / DSM 2839 / NBRC 102507 / CH34) (Ralstonia metallidurans) protein is DNA-directed RNA polymerase subunit omega.